A 313-amino-acid chain; its full sequence is uncharacterized protein (313 aa).

The segment at 1 to 313 is disordered; that stretch reads MSRNGRNDYD…SSSRSGSSRR (313 aa). Composition is skewed to basic and acidic residues over residues 24–33, 40–85, 95–116, and 156–181; these read LARDRERDSE, TGER…DVKY, TTRE…DELG, and TDER…DEFG. Residues 194 to 205 are compositionally biased toward basic residues; it reads RGRRSNSRRRSS. Composition is skewed to low complexity over residues 206 to 266 and 272 to 313; these read NARS…GSKS and SRSG…SSRR.

Its subcellular location is the virion. This is an uncharacterized protein from Acanthamoeba polyphaga mimivirus (APMV).